The sequence spans 1135 residues: Envelopment polyprotein (1135 aa).

Positions 1–35 (MRILKLLELVVKVSLFTIALSSVLLAFLIFRATDA) are cleaved as a signal peptide. Residues 36 to 314 (KVEIIRGDHP…KYSKSIYKQT (279 aa)) are Lumenal-facing. Residues 41-43 (RGD) carry the Cell attachment site motif. Cystine bridges form between Cys-114–Cys-145 and Cys-122–Cys-156. Asn-116 is a glycosylation site (N-linked (GlcNAc...) asparagine; by host). The segment at 177-195 (LDKKRHFSVGGKFFISESL) is non-covalent dimerization. Asn-210 carries an N-linked (GlcNAc...) asparagine; by host glycan. Cysteines 224 and 285 form a disulfide. Residues 315-366 (ACINFSWIRLILIALLIYFPIRWLVNKTTKPLFLWYDLMGLITYPVLLLINC) form a helical membrane-spanning segment. The Cytoplasmic segment spans residues 367 to 484 (LWKYFPLKCS…VPGCPFLVTS (118 aa)). The segment at 437-484 (LSLSLLKFVTEILIGLVILSQMPMSMAQTTQCLSGCFYVPGCPFLVTS) is signal for signal peptide peptidase. Topologically, residues 485–1067 (KFEKCSEKDQ…YFGSFFDTIR (583 aa)) are lumenal. Residues Asn-605 and Asn-980 are each glycosylated (N-linked (GlcNAc...) asparagine; by host). Residues 1068-1088 (VVLLIAFIFLVTYFCSILTSI) traverse the membrane as a helical segment. Residues 1089–1135 (CKGYVKNESYKSRSKIEDDDEPEIKAPMLMKDTMTRRRPPMDFSHLV) lie on the Cytoplasmic side of the membrane.

Belongs to the tospovirus envelope glycoprotein family. In terms of assembly, homodimer; disulfide-linked. Heterodimer with Glycoprotein C. Interacts with nucleoprotein. Heterodimer with Glycoprotein N. Interacts with nucleoprotein. In terms of processing, specific enzymatic cleavages in vivo yield mature proteins including Glycoprotein N and Glycoprotein C. Post-translationally, glycosylated with O-linked glycans. Glycosylation is essential for proper subcellular location. Cleaved at acidic pH.

The protein localises to the virion membrane. The protein resides in the host Golgi apparatus membrane. Its subcellular location is the host endoplasmic reticulum membrane. Forms the spikes present at the surface of the virion together with Glycoprotein C. They are able to attach the virion to a cell receptor and to promote fusion of membranes after endocytosis of the virion. Plays a role in virus binding and/or entry into the vector midgut. Its function is as follows. Forms the spikes present at the surface of the virion together with Glycoprotein N. They are able to attach the virion to a cell receptor and to promote fusion of membranes after endocytosis of the virion. Probable class II fusion protein. The sequence is that of Envelopment polyprotein (GP) from Tomato spotted wilt virus (strain Brazilian Br-01) (TSWV).